A 247-amino-acid chain; its full sequence is Ubiquinone biosynthesis O-methyltransferase (247 aa).

Residues R41, G72, D93, and M136 each coordinate S-adenosyl-L-methionine.

Belongs to the methyltransferase superfamily. UbiG/COQ3 family.

The enzyme catalyses a 3-demethylubiquinol + S-adenosyl-L-methionine = a ubiquinol + S-adenosyl-L-homocysteine + H(+). The catalysed reaction is a 3-(all-trans-polyprenyl)benzene-1,2-diol + S-adenosyl-L-methionine = a 2-methoxy-6-(all-trans-polyprenyl)phenol + S-adenosyl-L-homocysteine + H(+). It functions in the pathway cofactor biosynthesis; ubiquinone biosynthesis. Functionally, O-methyltransferase that catalyzes the 2 O-methylation steps in the ubiquinone biosynthetic pathway. This Bartonella tribocorum (strain CIP 105476 / IBS 506) protein is Ubiquinone biosynthesis O-methyltransferase.